We begin with the raw amino-acid sequence, 312 residues long: Ribosomal RNA small subunit methyltransferase H (312 aa).

Residues Gly30–His32, Asp50, Phe80, Asp98, and Gln105 contribute to the S-adenosyl-L-methionine site.

The protein belongs to the methyltransferase superfamily. RsmH family.

It localises to the cytoplasm. It carries out the reaction cytidine(1402) in 16S rRNA + S-adenosyl-L-methionine = N(4)-methylcytidine(1402) in 16S rRNA + S-adenosyl-L-homocysteine + H(+). Functionally, specifically methylates the N4 position of cytidine in position 1402 (C1402) of 16S rRNA. The protein is Ribosomal RNA small subunit methyltransferase H of Lawsonia intracellularis (strain PHE/MN1-00).